Reading from the N-terminus, the 139-residue chain is Small ribosomal subunit protein uS12m (139 aa).

Residues 1–29 (MSWSGLLRGLSMSLNYGLALAPRPWGTRP) constitute a mitochondrion transit peptide. Positions 37–57 (HRRGPPKFPPSKPGPTEGRPQ) are disordered.

Belongs to the universal ribosomal protein uS12 family. As to quaternary structure, component of the mitochondrial ribosome small subunit (28S) which comprises a 12S rRNA and about 30 distinct proteins.

The protein localises to the mitochondrion. The chain is Small ribosomal subunit protein uS12m (MRPS12) from Bos taurus (Bovine).